Here is a 260-residue protein sequence, read N- to C-terminus: MIPSLWISKTGLDAQQINMNVISNNLANVSTNGFKRSRAVFEDLMYQTMRQAGTNSSIDTTLPSGLQLGTGVRPVSTEKIYSQGNLSKTDSSKDVAINGPGFFQVQLPDGNIAYTRDGSFQLDQNGQLVTNSGYPIIPEINIPPNSINMNIGRDGIVSVTIQGQTQPISIGQLNLINFVNHSGLESLGENLYQETQASGNPIDTTPGLNGTGLLYQGYVETSNVNVAEELVNMIQTQRAYEINSKSINTSDQMLQKLSQL.

The protein belongs to the flagella basal body rod proteins family. The basal body constitutes a major portion of the flagellar organelle and consists of four rings (L,P,S, and M) mounted on a central rod. The rod consists of about 26 subunits of FlgG in the distal portion, and FlgB, FlgC and FlgF are thought to build up the proximal portion of the rod with about 6 subunits each.

The protein localises to the bacterial flagellum basal body. This is Flagellar basal-body rod protein FlgG (flgG) from Buchnera aphidicola subsp. Schizaphis graminum (strain Sg).